Consider the following 536-residue polypeptide: Probable monofunctional riboflavin biosynthesis protein RIBA 3, chloroplastic (536 aa).

The transit peptide at Met1 to Arg43 directs the protein to the chloroplast. The interval Cys44 to Lys310 is inactive DHBP synthase. D-ribulose 5-phosphate contacts are provided by residues Gly133–Asp134, Asp138, and Arg248–Thr252. Residues Arg311–Asn536 form a GTP cyclohydrolase II region. GTP is bound at residue Arg361–Glu365. Residues Cys366, Cys377, and Cys379 each contribute to the Zn(2+) site. GTP is bound by residues Gln382, Glu405–Arg407, and Thr427. Catalysis depends on Asp439, which acts as the Proton acceptor; for GTP cyclohydrolase activity. Arg441 serves as the catalytic Nucleophile; for GTP cyclohydrolase activity. GTP-binding residues include Thr462 and Lys467. Residues Tyr507–Asn536 are disordered. Positions Ile525 to Asn536 are enriched in acidic residues.

The protein in the N-terminal section; belongs to the DHBP synthase family. It in the C-terminal section; belongs to the GTP cyclohydrolase II family. The cofactor is Zn(2+).

Its subcellular location is the plastid. It localises to the chloroplast. The catalysed reaction is GTP + 4 H2O = 2,5-diamino-6-hydroxy-4-(5-phosphoribosylamino)-pyrimidine + formate + 2 phosphate + 3 H(+). It participates in cofactor biosynthesis; riboflavin biosynthesis; 5-amino-6-(D-ribitylamino)uracil from GTP: step 1/4. Involved in riboflavin biosynthesis. Catalyzes the conversion of GTP to 2,5-diamino-6-ribosylamino-4(3H)-pyrimidinone 5'-phosphate (DARP), formate and pyrophosphate. This chain is Probable monofunctional riboflavin biosynthesis protein RIBA 3, chloroplastic (RIBA3), found in Oryza sativa subsp. japonica (Rice).